The primary structure comprises 338 residues: MKVFYDKDCDLSIIQGKKVAIIGYGSQGHAQACNLKDSGVDVTVGLRKGSATVAKAEAHGLKVTDVASAVAAADLVMILTPDEFQSQLYKNEVEPNLKKGATLAFSHGFAIHYNQVVPRADLDVIMIAPKAPGHTVRTEFVKGGGIPDLIAVYQDASGNAKNVALSYASGVGGGRTGIIETTFKDETETDLFGEQAVLCGGTVELVKAGFETLVEAGYAPEMAYFECLHELKLIVDLMYEGGIANMNYSISNNAEYGEYVTGPEVINAESRQAMRNALKRIQDGEYAKMFITEGATGYPSMTAKRRNNAEHGIEVIGEKLRSMMPWIAANKIVDKDKN.

Residues 1 to 181 (MKVFYDKDCD…GGGRTGIIET (181 aa)) form the KARI N-terminal Rossmann domain. NADP(+)-binding positions include 24 to 27 (YGSQ), Arg47, Ser50, Thr52, and 82 to 85 (DEFQ). His107 is a catalytic residue. Gly133 contacts NADP(+). The KARI C-terminal knotted domain maps to 182 to 327 (TFKDETETDL…EKLRSMMPWI (146 aa)). Residues Asp190, Glu194, Glu226, and Glu230 each contribute to the Mg(2+) site. A substrate-binding site is contributed by Ser251.

This sequence belongs to the ketol-acid reductoisomerase family. Mg(2+) serves as cofactor.

It catalyses the reaction (2R)-2,3-dihydroxy-3-methylbutanoate + NADP(+) = (2S)-2-acetolactate + NADPH + H(+). The enzyme catalyses (2R,3R)-2,3-dihydroxy-3-methylpentanoate + NADP(+) = (S)-2-ethyl-2-hydroxy-3-oxobutanoate + NADPH + H(+). It participates in amino-acid biosynthesis; L-isoleucine biosynthesis; L-isoleucine from 2-oxobutanoate: step 2/4. It functions in the pathway amino-acid biosynthesis; L-valine biosynthesis; L-valine from pyruvate: step 2/4. Its function is as follows. Involved in the biosynthesis of branched-chain amino acids (BCAA). Catalyzes an alkyl-migration followed by a ketol-acid reduction of (S)-2-acetolactate (S2AL) to yield (R)-2,3-dihydroxy-isovalerate. In the isomerase reaction, S2AL is rearranged via a Mg-dependent methyl migration to produce 3-hydroxy-3-methyl-2-ketobutyrate (HMKB). In the reductase reaction, this 2-ketoacid undergoes a metal-dependent reduction by NADPH to yield (R)-2,3-dihydroxy-isovalerate. This is Ketol-acid reductoisomerase (NADP(+)) from Pseudomonas syringae pv. tomato (strain ATCC BAA-871 / DC3000).